A 503-amino-acid chain; its full sequence is 2-(3-amino-3-carboxypropyl)histidine synthase subunit 2 (503 aa).

3 residues coordinate [4Fe-4S] cluster: cysteine 93, cysteine 114, and cysteine 334. The tract at residues 464–503 (GLDSVDEGEGPSKLYEGQSGIAKGYVGEGSKEKIQRDFGK) is disordered. Basic and acidic residues predominate over residues 492-503 (GSKEKIQRDFGK).

This sequence belongs to the DPH1/DPH2 family. DPH2 subfamily. As to quaternary structure, component of the 2-(3-amino-3-carboxypropyl)histidine synthase complex composed of dph1, dph2, dph3 and a NADH-dependent reductase, predominantly cbr1. The cofactor is [4Fe-4S] cluster.

The protein localises to the cytoplasm. It functions in the pathway protein modification; peptidyl-diphthamide biosynthesis. Functionally, required for the first step of diphthamide biosynthesis, a post-translational modification of histidine which occurs in elongation factor 2. Dph1 and dph2 transfer a 3-amino-3-carboxypropyl (ACP) group from S-adenosyl-L-methionine (SAM) to a histidine residue, the reaction is assisted by a reduction system comprising dph3 and a NADH-dependent reductase, predominantly cbr1. Facilitates the reduction of the catalytic iron-sulfur cluster found in the dph1 subunit. This is 2-(3-amino-3-carboxypropyl)histidine synthase subunit 2 from Schizosaccharomyces pombe (strain 972 / ATCC 24843) (Fission yeast).